The chain runs to 266 residues: Enterotoxin type C-2 (266 aa).

A signal peptide spans 1–27 (MNKSRFISCVILIFALILVLFTPNVLA). Residues Asp36, His74, Glu98, Glu107, and Asp110 each contribute to the Zn(2+) site. Residues Cys120 and Cys137 are joined by a disulfide bond. The Zn(2+) site is built by His145, Glu146, and His149.

The protein belongs to the staphylococcal/streptococcal toxin family. Interacts with host MHC class II molecules composed of alpha/HLA-DRA and beta/HLA-DRB1 chains. The cofactor is Zn(2+).

Its subcellular location is the secreted. In terms of biological role, staphylococcal enterotoxin that activates the host immune system by binding as unprocessed molecules to major histocompatibility (MHC) complex class II and T-cell receptor (TCR) molecules. In turn, this ternary complex activates a large number of T-lymphocytes initiating a systemic release of pro-inflammatory cytokines. Also causes the intoxication staphylococcal food poisoning syndrome. This chain is Enterotoxin type C-2 (entC2), found in Staphylococcus aureus.